The chain runs to 479 residues: Ribulose bisphosphate carboxylase large chain (479 aa).

Residues 1-2 (MS) constitute a propeptide that is removed on maturation. Substrate contacts are provided by Asn-123 and Thr-173. Catalysis depends on Lys-175, which acts as the Proton acceptor. Lys-177 lines the substrate pocket. The Mg(2+) site is built by Lys-201, Asp-203, and Glu-204. The residue at position 201 (Lys-201) is an N6-carboxylysine. Ser-208 is modified (phosphoserine). The active-site Proton acceptor is His-294. Positions 295 and 327 each coordinate substrate. Position 330 is a phosphothreonine (Thr-330). Residue Ser-379 participates in substrate binding.

Belongs to the RuBisCO large chain family. Type I subfamily. Heterohexadecamer of 8 large chains and 8 small chains; disulfide-linked. The disulfide link is formed within the large subunit homodimers. The cofactor is Mg(2+). Post-translationally, the disulfide bond which can form in the large chain dimeric partners within the hexadecamer appears to be associated with oxidative stress and protein turnover.

The protein localises to the plastid. It is found in the chloroplast. It catalyses the reaction 2 (2R)-3-phosphoglycerate + 2 H(+) = D-ribulose 1,5-bisphosphate + CO2 + H2O. It carries out the reaction D-ribulose 1,5-bisphosphate + O2 = 2-phosphoglycolate + (2R)-3-phosphoglycerate + 2 H(+). In terms of biological role, ruBisCO catalyzes two reactions: the carboxylation of D-ribulose 1,5-bisphosphate, the primary event in carbon dioxide fixation, as well as the oxidative fragmentation of the pentose substrate in the photorespiration process. Both reactions occur simultaneously and in competition at the same active site. In Arabis hirsuta (Hairy rock-cress), this protein is Ribulose bisphosphate carboxylase large chain.